Here is a 159-residue protein sequence, read N- to C-terminus: Type IV major alpha-pilin (159 aa).

A propeptide spans 1 to 6 (MNAQKG) (leader sequence). Phe7 is modified (N-methylphenylalanine). A helical transmembrane segment spans residues 7-27 (FTLIELMIVIAIIGILAAIAL). Positions 64-87 (VLSEESSTSKENIGLTSSETSTKP) are disordered. Residues 67–87 (EESSTSKENIGLTSSETSTKP) show a composition bias toward polar residues. A disulfide bond links Cys137 and Cys156.

Belongs to the N-Me-Phe pilin family. Major component of the type IV pilus (T4P) that plays a role in surface and attachment to the host epithelial tissues.

The protein resides in the fimbrium. It is found in the membrane. The protein is Type IV major alpha-pilin (tfpI) of Moraxella bovis.